The chain runs to 397 residues: Ubiquitin-like modifier-activating enzyme 5 (397 aa).

5 residues coordinate ATP: Gly76, Asp97, Lys120, Asn143, and Asn177. Positions 219 and 222 each coordinate Zn(2+). The Glycyl thioester intermediate role is filled by Cys243. Residues Cys296 and Cys301 each coordinate Zn(2+). The segment at 343–384 (PSDAPTDLSQSTDVGQGLRLAYEAPEKSSAEATQAATAPVDD) is disordered.

This sequence belongs to the ubiquitin-activating E1 family. UBA5 subfamily.

In terms of biological role, E1-like enzyme which activates UFM1. The sequence is that of Ubiquitin-like modifier-activating enzyme 5 from Drosophila pseudoobscura pseudoobscura (Fruit fly).